The sequence spans 530 residues: AarF domain-containing protein kinase 1 (530 aa).

The 313-residue stretch at 155–467 (SFDDTPLGTA…ASSFLNMSRC (313 aa)) folds into the Protein kinase domain. Residues 161-169 (LGTASLAQV) and Lys183 contribute to the ATP site. Asp315 functions as the Proton acceptor in the catalytic mechanism.

Belongs to the protein kinase superfamily. ADCK protein kinase family.

The protein resides in the mitochondrion. In terms of biological role, appears to be essential for maintaining mitochondrial cristae formation and mitochondrial function by acting via YME1L1 in a kinase-independent manner to regulate essential mitochondrial structural proteins OPA1 and IMMT. The action of this enzyme is not yet clear. It is not known if it has protein kinase activity and what type of substrate it would phosphorylate (Ser, Thr or Tyr). This Homo sapiens (Human) protein is AarF domain-containing protein kinase 1.